The chain runs to 96 residues: Translation initiation factor 1A 1 (96 aa).

The S1-like domain maps to 8 to 82 (GSHDLRMPDD…EKGDITWRYE (75 aa)).

This sequence belongs to the eIF-1A family.

In terms of biological role, seems to be required for maximal rate of protein biosynthesis. Enhances ribosome dissociation into subunits and stabilizes the binding of the initiator Met-tRNA(I) to 40 S ribosomal subunits. This is Translation initiation factor 1A 1 from Haloquadratum walsbyi (strain DSM 16790 / HBSQ001).